A 208-amino-acid chain; its full sequence is LexA repressor (208 aa).

The H-T-H motif DNA-binding region spans 28–48 (RAEIARELGFRSANAAEEHLK). Active-site for autocatalytic cleavage activity residues include Ser125 and Lys162.

The protein belongs to the peptidase S24 family. In terms of assembly, homodimer.

The catalysed reaction is Hydrolysis of Ala-|-Gly bond in repressor LexA.. Its function is as follows. Represses a number of genes involved in the response to DNA damage (SOS response), including recA and lexA. In the presence of single-stranded DNA, RecA interacts with LexA causing an autocatalytic cleavage which disrupts the DNA-binding part of LexA, leading to derepression of the SOS regulon and eventually DNA repair. The polypeptide is LexA repressor (Aliivibrio fischeri (strain MJ11) (Vibrio fischeri)).